The sequence spans 258 residues: Methanol--corrinoid protein (258 aa).

A B12-binding N-terminal domain is found at 30–124; that stretch reads AEELYPKDEL…NSGATPKTKG (95 aa). The B12-binding domain maps to 123 to 248; the sequence is KGTVVCHVAE…DAIIAGTTDV (126 aa). His-136 is a binding site for methylcob(III)alamin.

It belongs to the methylamine corrinoid protein family. As to quaternary structure, heterotetramer, composed of 2 MtaB and 2 MtaC subunits.

In terms of biological role, harbors a corrinoid prosthetic group and acts as a methyl group carrier in methanogenesis in the methanol pathway. The methyl group of methanol is first transferred to the corrinoid prosthetic group of MtaC in the cob(I)amide oxidation state. This reaction is mediated by MtaB. The methyl group from MtaC is then transferred to coenzyme M by MtaA. The polypeptide is Methanol--corrinoid protein (mtaC) (Methanosarcina barkeri (strain Fusaro / DSM 804)).